Reading from the N-terminus, the 37-residue chain is Photosystem II reaction center protein M (37 aa).

A helical transmembrane segment spans residues 5-25; that stretch reads ILAFIATALFILVPTAFLLII.

It belongs to the PsbM family. In terms of assembly, PSII is composed of 1 copy each of membrane proteins PsbA, PsbB, PsbC, PsbD, PsbE, PsbF, PsbH, PsbI, PsbJ, PsbK, PsbL, PsbM, PsbT, PsbX, PsbY, PsbZ, Psb30/Ycf12, at least 3 peripheral proteins of the oxygen-evolving complex and a large number of cofactors. It forms dimeric complexes.

The protein resides in the plastid. The protein localises to the chloroplast thylakoid membrane. One of the components of the core complex of photosystem II (PSII). PSII is a light-driven water:plastoquinone oxidoreductase that uses light energy to abstract electrons from H(2)O, generating O(2) and a proton gradient subsequently used for ATP formation. It consists of a core antenna complex that captures photons, and an electron transfer chain that converts photonic excitation into a charge separation. This subunit is found at the monomer-monomer interface. The protein is Photosystem II reaction center protein M of Pelargonium hortorum (Common geranium).